The following is a 375-amino-acid chain: Beta sliding clamp (375 aa).

This sequence belongs to the beta sliding clamp family. In terms of assembly, forms a ring-shaped head-to-tail homodimer around DNA which binds and tethers DNA polymerases and other proteins to the DNA. The DNA replisome complex has a single clamp-loading complex (3 tau and 1 each of delta, delta', psi and chi subunits) which binds 3 Pol III cores (1 core on the leading strand and 2 on the lagging strand) each with a beta sliding clamp dimer. Additional proteins in the replisome are other copies of gamma, psi and chi, Ssb, DNA helicase and RNA primase.

Its subcellular location is the cytoplasm. In terms of biological role, confers DNA tethering and processivity to DNA polymerases and other proteins. Acts as a clamp, forming a ring around DNA (a reaction catalyzed by the clamp-loading complex) which diffuses in an ATP-independent manner freely and bidirectionally along dsDNA. Initially characterized for its ability to contact the catalytic subunit of DNA polymerase III (Pol III), a complex, multichain enzyme responsible for most of the replicative synthesis in bacteria; Pol III exhibits 3'-5' exonuclease proofreading activity. The beta chain is required for initiation of replication as well as for processivity of DNA replication. This Mycoplasma capricolum subsp. capricolum (strain California kid / ATCC 27343 / NCTC 10154) protein is Beta sliding clamp (dnaN).